Consider the following 201-residue polypeptide: Transmembrane 4 L6 family member 18 (201 aa).

Over 1–9 (MGSRKCGSC) the chain is Cytoplasmic. The helical transmembrane segment at 10-30 (LSSLLIPLALWSIIVNILLYF) threads the bilayer. Residues 31-49 (PNGQASYASSNKLTNYVWY) lie on the Extracellular side of the membrane. Residues 50–70 (FEGICFSGIMMLVVAAVLLVL) traverse the membrane as a helical segment. The Cytoplasmic portion of the chain corresponds to 71–93 (ENDNNYKCCQSENCSKKYMTVLS). Residues 94-114 (MIFSALGIAFSGYCLVISALG) form a helical membrane-spanning segment. Over 115–157 (LLQGPYCRTLDGWEYAFEGTAGRFLTDSREWIQCLEPAHVVEW) the chain is Extracellular. Residues 158-178 (NIILFSILIALSGLQVIVCLI) traverse the membrane as a helical segment. Over 179–201 (RVVIQLSKSLCGTYSVIIQPGII) the chain is Cytoplasmic.

The protein belongs to the L6 tetraspanin family.

It localises to the membrane. This Bos taurus (Bovine) protein is Transmembrane 4 L6 family member 18 (TM4SF18).